The chain runs to 148 residues: Angiogenin-1 (148 aa).

An N-terminal signal peptide occupies residues 1–23 (MVMVLSPLLLVFILGLGLTPVAP). His-37 functions as the Proton acceptor in the catalytic mechanism. TRNA is bound at residue Arg-45. 3 disulfide bridges follow: Cys-50–Cys-105, Cys-63–Cys-116, and Cys-81–Cys-131. Residues 55-59 (KNRRL) carry the Nucleolar localization signal motif. TRNA-binding residues include Cys-105 and Ile-127. The active-site Proton donor is the His-138.

Belongs to the pancreatic ribonuclease family. As to quaternary structure, homodimer. Interacts with RNH1; inhibiting ANG ribonuclease activity. As to expression, serum and milk.

It is found in the secreted. The protein resides in the nucleus. It localises to the nucleolus. Its subcellular location is the cytoplasm. The protein localises to the stress granule. Functionally, secreted ribonuclease that can either promote or restrict cell proliferation of target cells, depending on the context. Endocytosed in target cells via its receptor PLXNB2 and translocates to the cytoplasm or nucleus. Under stress conditions, localizes to the cytoplasm and promotes the assembly of stress granules (SGs): specifically cleaves a subset of tRNAs within anticodon loops to produce tRNA-derived stress-induced fragments (tiRNAs), resulting in translation repression and inhibition of cell proliferation. tiRNas also prevent formation of apoptosome, thereby promoting cell survival. Preferentially cleaves RNAs between a pyrimidine and an adenosine residue, suggesting that it cleaves the anticodon loop of tRNA(Ala) (32-UUAGCAU-38) after positions 33 and 36. Cleaves a subset of tRNAs, including tRNA(Ala), tRNA(Glu), tRNA(Gly), tRNA(Lys), tRNA(Val), tRNA(His), tRNA(Asp) and tRNA(Sec). Under growth conditions and in differentiated cells, translocates to the nucleus and stimulates ribosomal RNA (rRNA) transcription, including that containing the initiation site sequences of 45S rRNA, thereby promoting cell growth and proliferation. Angiogenin induces vascularization of normal and malignant tissues via its ability to promote rRNA transcription. The protein is Angiogenin-1 (ANG1) of Bos taurus (Bovine).